The following is a 319-amino-acid chain: Tryptophan--tRNA ligase (319 aa).

ATP-binding positions include 8 to 10 and 16 to 17; these read QPS and GN. The short motif at 9 to 17 is the 'HIGH' region element; that stretch reads PSGDLHIGN. Residue D131 coordinates L-tryptophan. ATP-binding positions include 143-145, V182, and 189-193; these read GKD and KMSKS. A 'KMSKS' region motif is present at residues 189-193; that stretch reads KMSKS.

The protein belongs to the class-I aminoacyl-tRNA synthetase family. Homodimer.

It is found in the cytoplasm. The enzyme catalyses tRNA(Trp) + L-tryptophan + ATP = L-tryptophyl-tRNA(Trp) + AMP + diphosphate + H(+). Functionally, catalyzes the attachment of tryptophan to tRNA(Trp). This chain is Tryptophan--tRNA ligase, found in Campylobacter jejuni subsp. jejuni serotype O:2 (strain ATCC 700819 / NCTC 11168).